The primary structure comprises 415 residues: Methylaspartate ammonia-lyase 2 (415 aa).

Q173 lines the (2S,3S)-3-methyl-L-aspartate pocket. 3 residues coordinate Mg(2+): D238, E273, and D307. Q329 contributes to the (2S,3S)-3-methyl-L-aspartate binding site. K331 functions as the Proton acceptor in the catalytic mechanism. 360 to 361 lines the (2S,3S)-3-methyl-L-aspartate pocket; sequence TC.

Belongs to the methylaspartate ammonia-lyase family. As to quaternary structure, homodimer. Mg(2+) serves as cofactor.

It carries out the reaction (2S,3S)-3-methyl-L-aspartate = mesaconate + NH4(+). It participates in amino-acid degradation; L-glutamate degradation via mesaconate pathway; acetate and pyruvate from L-glutamate: step 2/4. In terms of biological role, involved in the methylaspartate cycle. Catalyzes the formation of the alpha,beta-unsaturated bond by the reversible anti elimination of ammonia from L-threo-beta-methylaspartate (L-threo-(2S,3S)-3-methylaspartate) to give mesaconate. The chain is Methylaspartate ammonia-lyase 2 from Carboxydothermus hydrogenoformans (strain ATCC BAA-161 / DSM 6008 / Z-2901).